Here is a 156-residue protein sequence, read N- to C-terminus: MKKESIYLTKEGYEKLKAELDQLKQKLMFEIAQRIKEARELGDLSENSEYQEAKNEQGRIAARINELENMLSKAEVIEGLDTNVINIGNWVLIKNLDTGEEKTIQIVTPHEADVFNNKISFESPIGRVLVGKKVGEVVKIKAPKGVFKYQILGIKI.

A coiled-coil region spans residues 6–75 (IYLTKEGYEK…ELENMLSKAE (70 aa)).

The protein belongs to the GreA/GreB family.

In terms of biological role, necessary for efficient RNA polymerase transcription elongation past template-encoded arresting sites. The arresting sites in DNA have the property of trapping a certain fraction of elongating RNA polymerases that pass through, resulting in locked ternary complexes. Cleavage of the nascent transcript by cleavage factors such as GreA or GreB allows the resumption of elongation from the new 3'terminus. GreA releases sequences of 2 to 3 nucleotides. The polypeptide is Transcription elongation factor GreA (Thermosipho africanus (strain TCF52B)).